Consider the following 168-residue polypeptide: Vitelline membrane protein Vm26Ab (168 aa).

A signal peptide spans 1–23 (MAFNFGHLLIAGLVALSAVSSET). Positions 24–42 (IQLQPTQGILIPAPLAENI) are cleaved as a propeptide — removed between stage 11 and 14 of oogenesis. An essential for N-terminal propeptide removal. Potential serine protease cleavage site region spans residues 43 to 46 (RVSR). The 8 X 8 AA approximate repeats of P-[AS]-Y-S-A-P-A-[AS] stretch occupies residues 52–119 (YGAAPAAPSY…PAYSAPASIP (68 aa)). A 1; half-length repeat occupies 55–58 (APAA). Repeat 2 spans residues 59–66 (PSYSAPAA). The 3; approximate repeat unit spans residues 70-77 (QAYSAPAA). Tandem repeats lie at residues 78–85 (PAYSAPAA), 86–93 (PAYSAPAA), 94–101 (PAYSAPAA), 102–109 (PAYSAPAA), and 110–117 (PAYSAPAS). In terms of domain architecture, VM spans 117–154 (SIPSPPCPKNYLFSCQPSLQPVPCSAPAQSYGSAGAYS). A propeptide spans 155–168 (QYVPQYAVPFVREL) (removed between stage 9 and 12 of oogenesis).

It belongs to the vitelline membrane protein family. Interacts with vml and Vm26Aa; forms part of a disulfide-linked network within the vitelline membrane of stage 10 egg chambers. Post-translationally, proteolytically processed after secretion into the perivitelline space. Undergoes several proteolytic processing steps during formation of the vitelline membrane; an initial processing step removing a C-terminal propeptide occurs between stage 9 and 12 of oogenesis while a second removing a N-terminal propeptide occurs between stage 11 and 14. In terms of processing, becomes part of a disulfide-linked network including other vitelline membrane proteins, including vml and Vm26Aa, during vitelline membrane biogenesis and maturation. Cys-123, Cys-131 and Cys-140 are involved in disulfide network formation, with Cys-131 being the most important. Undergoes both disulfide and non-disulfide cross-linking upon incorporation into the vitelline membrane. In terms of tissue distribution, follicle cells.

Its subcellular location is the secreted. It is found in the extracellular space. The protein localises to the extracellular matrix. Its function is as follows. Major early eggshell protein secreted by follicle cells into the perivitelline space and incorporated into the vitelline membrane. Involved in vitelline membrane biogenesis; forms a cross-linked network with other vitelline membrane components. This is Vitelline membrane protein Vm26Ab from Drosophila melanogaster (Fruit fly).